Consider the following 417-residue polypeptide: Valine--pyruvate aminotransferase (417 aa).

N6-(pyridoxal phosphate)lysine is present on Lys-249.

The protein belongs to the class-I pyridoxal-phosphate-dependent aminotransferase family. In terms of assembly, homodimer. The cofactor is pyridoxal 5'-phosphate.

Its subcellular location is the cytoplasm. The catalysed reaction is L-valine + pyruvate = 3-methyl-2-oxobutanoate + L-alanine. In terms of biological role, involved in the biosynthesis of alanine. The protein is Valine--pyruvate aminotransferase (avtA) of Escherichia coli (strain K12).